Reading from the N-terminus, the 481-residue chain is Pentatricopeptide repeat-containing protein 8, mitochondrial (481 aa).

Residues M1–Q55 constitute a mitochondrion transit peptide. 2 PPR repeats span residues S137–P172 and S365–P399.

The protein resides in the mitochondrion. Functionally, mitochondrial RNA-binding protein involved in mitochondrial translation. The cox1 mRNA is one target but it is not clear if ppr8 has a single or multiple targets. This chain is Pentatricopeptide repeat-containing protein 8, mitochondrial (ppr8), found in Schizosaccharomyces pombe (strain 972 / ATCC 24843) (Fission yeast).